The chain runs to 131 residues: Small ribosomal subunit protein uS11 (131 aa).

The protein belongs to the universal ribosomal protein uS11 family. Part of the 30S ribosomal subunit. Interacts with proteins S7 and S18. Binds to IF-3.

In terms of biological role, located on the platform of the 30S subunit, it bridges several disparate RNA helices of the 16S rRNA. Forms part of the Shine-Dalgarno cleft in the 70S ribosome. In Paramagnetospirillum magneticum (strain ATCC 700264 / AMB-1) (Magnetospirillum magneticum), this protein is Small ribosomal subunit protein uS11.